Reading from the N-terminus, the 346-residue chain is MAMVSEFLKQAWFIENEEQEYIKTVKGSKGGPGSAVSPYPTFNPSSDVEALHKAITVKGVDEATIIEILTKRNNAQRQQIKAAYLQEKGKPLDEVLKKALLGHLEEVVLALLKTPAQFDAEELRAAMKGLGTDEDTLNEILASRTNREIREINRVYREELKRDLAKDIASDTSGDYEKALLSLAKGDRSEELAVNDDLADSDARALYEAGERRKGTDVNVFITILTTRSYPHLRRVFQKYSKYSKHDMNKVLDLELKGDIEKCLTVIVKCATSQPMFFAEKLHQAMKGIGTRHKTLIRIMVSRSEIDMNDIKACYQKLYGISLCQAILDETKGDYEKILVALCGRD.

At Ala2 the chain carries N-acetylalanine. Ser5 bears the Phosphoserine; by TRPM7 mark. Gln19 is covalently cross-linked (Isoglutamyl lysine isopeptide (Gln-Lys) (interchain with K-?)). A Phosphotyrosine; by EGFR modification is found at Tyr21. Phosphoserine occurs at positions 34 and 37. A Phosphothreonine modification is found at Thr41. 4 Annexin repeats span residues 42 to 113 (FNPS…ALLK), 114 to 185 (TPAQ…SLAK), 197 to 269 (DLAD…VIVK), and 273 to 344 (SQPM…ALCG). The residue at position 58 (Lys58) is an N6-acetyllysine. Residues Gly59, Val60, Glu62, Lys97, Leu100, Glu105, Met127, Gly129, Gly131, Thr132, and Glu134 each coordinate Ca(2+). Thr136 carries the post-translational modification Phosphothreonine. Residues Asp171, Gly210, and Arg213 each contribute to the Ca(2+) site. Lys214 participates in a covalent cross-link: Glycyl lysine isopeptide (Lys-Gly) (interchain with G-Cter in SUMO1); alternate. A Glycyl lysine isopeptide (Lys-Gly) (interchain with G-Cter in SUMO2); alternate cross-link involves residue Lys214. Gly215 provides a ligand contact to Ca(2+). Lys239 carries the N6-acetyllysine modification. Residues Asp253, Glu255, and Leu256 each contribute to the Ca(2+) site. Lys257 is covalently cross-linked (Glycyl lysine isopeptide (Lys-Gly) (interchain with G-Cter in SUMO1)). Ca(2+) is bound by residues Glu261, Met286, Gly288, and Gly290. An N6-acetyllysine modification is found at Lys312. A disulfide bridge links Cys324 with Cys343. Ca(2+) is bound by residues Leu328, Glu330, and Thr331. A Glycyl lysine isopeptide (Lys-Gly) (interchain with G-Cter in SUMO1) cross-link involves residue Lys332. Glu336 lines the Ca(2+) pocket.

Belongs to the annexin family. As to quaternary structure, homodimer; non-covalently linked. Homodimer; linked by transglutamylation. Homodimers linked by transglutamylation are observed in placenta, but not in other tissues. Interacts with S100A11. Heterotetramer, formed by two molecules each of S100A11 and ANXA1. Interacts with DYSF. Interacts with EGFR. In terms of processing, phosphorylated by protein kinase C, EGFR and TRPM7. Phosphorylated in response to EGF treatment. Post-translationally, sumoylated. Proteolytically cleaved by cathepsin CTSG to release the active N-terminal peptide Ac2-26. In terms of tissue distribution, detected on surface epithelia and mucosal glands in nasal cavity, trachea, bronchi and bronchioles. Detected in blood vessel endothelial cells. Detected in neutrophils (at protein level).

Its subcellular location is the nucleus. It localises to the cytoplasm. The protein resides in the cell projection. The protein localises to the cilium. It is found in the basolateral cell membrane. Its subcellular location is the lateral cell membrane. It localises to the cell membrane. The protein resides in the apical cell membrane. The protein localises to the membrane. It is found in the endosome membrane. Its subcellular location is the secreted. It localises to the extracellular space. The protein resides in the early endosome. The protein localises to the cytoplasmic vesicle membrane. It is found in the extracellular exosome. Its subcellular location is the cytoplasmic vesicle. It localises to the secretory vesicle lumen. The protein resides in the phagocytic cup. In terms of biological role, plays important roles in the innate immune response as effector of glucocorticoid-mediated responses and regulator of the inflammatory process. Has anti-inflammatory activity. Plays a role in glucocorticoid-mediated down-regulation of the early phase of the inflammatory response. Contributes to the adaptive immune response by enhancing signaling cascades that are triggered by T-cell activation, regulates differentiation and proliferation of activated T-cells. Promotes the differentiation of T-cells into Th1 cells and negatively regulates differentiation into Th2 cells. Has no effect on unstimulated T-cells. Negatively regulates hormone exocytosis via activation of the formyl peptide receptors and reorganization of the actin cytoskeleton. Has high affinity for Ca(2+) and can bind up to eight Ca(2+) ions. Displays Ca(2+)-dependent binding to phospholipid membranes. Plays a role in the formation of phagocytic cups and phagosomes. Plays a role in phagocytosis by mediating the Ca(2+)-dependent interaction between phagosomes and the actin cytoskeleton. Functionally, functions at least in part by activating the formyl peptide receptors and downstream signaling cascades. Promotes chemotaxis of granulocytes and monocytes via activation of the formyl peptide receptors. Promotes rearrangement of the actin cytoskeleton, cell polarization and cell migration. Promotes resolution of inflammation and wound healing. Acts via neutrophil N-formyl peptide receptors to enhance the release of CXCL2. The sequence is that of Annexin A1 (ANXA1) from Bos taurus (Bovine).